A 703-amino-acid polypeptide reads, in one-letter code: DNA ligase (703 aa).

Positions 1–20 are disordered; the sequence is MNDNLDLFSGAAPAAPESGA. Positions 9–20 are enriched in low complexity; it reads SGAAPAAPESGA. Residues 53-57, 102-103, and Glu-139 each bind NAD(+); these read DGEYD and SI. Lys-141 functions as the N6-AMP-lysine intermediate in the catalytic mechanism. Positions 162, 200, 321, and 345 each coordinate NAD(+). 4 residues coordinate Zn(2+): Cys-439, Cys-442, Cys-457, and Cys-463. The region spanning 622 to 703 is the BRCT domain; sequence QTAQPLAGMT…MLALLAGGDR (82 aa).

The protein belongs to the NAD-dependent DNA ligase family. LigA subfamily. It depends on Mg(2+) as a cofactor. The cofactor is Mn(2+).

The catalysed reaction is NAD(+) + (deoxyribonucleotide)n-3'-hydroxyl + 5'-phospho-(deoxyribonucleotide)m = (deoxyribonucleotide)n+m + AMP + beta-nicotinamide D-nucleotide.. In terms of biological role, DNA ligase that catalyzes the formation of phosphodiester linkages between 5'-phosphoryl and 3'-hydroxyl groups in double-stranded DNA using NAD as a coenzyme and as the energy source for the reaction. It is essential for DNA replication and repair of damaged DNA. This is DNA ligase from Delftia acidovorans (strain DSM 14801 / SPH-1).